Here is a 106-residue protein sequence, read N- to C-terminus: Cytochrome c2 (106 aa).

Heme c-binding residues include Cys-19, Cys-22, His-23, and Met-84.

It belongs to the cytochrome c family. Post-translationally, binds 1 heme c group covalently per subunit.

In Rhodopila globiformis (Rhodopseudomonas globiformis), this protein is Cytochrome c2.